Here is a 502-residue protein sequence, read N- to C-terminus: Lysine--tRNA ligase (502 aa).

Residues Glu413 and Glu420 each contribute to the Mg(2+) site.

It belongs to the class-II aminoacyl-tRNA synthetase family. In terms of assembly, homodimer. The cofactor is Mg(2+).

The protein resides in the cytoplasm. It catalyses the reaction tRNA(Lys) + L-lysine + ATP = L-lysyl-tRNA(Lys) + AMP + diphosphate. The chain is Lysine--tRNA ligase from Haemophilus influenzae (strain PittEE).